An 88-amino-acid polypeptide reads, in one-letter code: UPF0297 protein SSA_2241 (88 aa).

It belongs to the UPF0297 family.

This is UPF0297 protein SSA_2241 from Streptococcus sanguinis (strain SK36).